Here is a 476-residue protein sequence, read N- to C-terminus: MGIKFLEVIKPFCAVLPEIQKPERKIQFREKVLWTAITLFIFLVCCQIPLFGIMSSDSADPFYWMRVILASNRGTLMELGISPIVTSGLIMQLLAGAKIIEVGDTPKDRALFNGAQKLFGMIITIGQAIVYVMTGMYGDPAEMGAGICLLIIIQLFVAGLIVLLLDELLQKGYGLGSGISLFIATNICETIVWKAFSPTTINTGRGTEFEGAVIALFHLLATRTDKVRALREAFYRQNLPNLMNLIATVFVFAVVIYFQGFRVDLPIKSARYRGQYSSYPIKLFYTSNIPIILQSALVSNLYVISQMLSVRFSGNFLVNLLGQWADVSGGGPARSYPVGGLCYYLSPPESMGAIFEDPVHVVVYIIFMLGSCAFFSKTWIEVSGSSAKDVAKQLKEQQMVMRGHRDTSMVHELNRYIPTAAAFGGLCIGALSVLADFLGAIGSGTGILLAVTIIYQYFEIFVKEQAEVGGMGALFF.

At 1–33 (MGIKFLEVIKPFCAVLPEIQKPERKIQFREKVL) the chain is on the cytoplasmic side. A helical transmembrane segment spans residues 34 to 53 (WTAITLFIFLVCCQIPLFGI). Topologically, residues 54–76 (MSSDSADPFYWMRVILASNRGTL) are lumenal. The chain crosses the membrane as a helical span at residues 77 to 96 (MELGISPIVTSGLIMQLLAG). Residues 97–117 (AKIIEVGDTPKDRALFNGAQK) lie on the Cytoplasmic side of the membrane. Residues 118–138 (LFGMIITIGQAIVYVMTGMYG) form a helical membrane-spanning segment. At 139-144 (DPAEMG) the chain is on the lumenal side. Residues 145-165 (AGICLLIIIQLFVAGLIVLLL) traverse the membrane as a helical segment. The Cytoplasmic portion of the chain corresponds to 166 to 172 (DELLQKG). A helical membrane pass occupies residues 173–193 (YGLGSGISLFIATNICETIVW). Topologically, residues 194–240 (KAFSPTTINTGRGTEFEGAVIALFHLLATRTDKVRALREAFYRQNLP) are lumenal. A helical transmembrane segment spans residues 241–261 (NLMNLIATVFVFAVVIYFQGF). Residues 262–288 (RVDLPIKSARYRGQYSSYPIKLFYTSN) lie on the Cytoplasmic side of the membrane. A helical transmembrane segment spans residues 289–309 (IPIILQSALVSNLYVISQMLS). At 310–354 (VRFSGNFLVNLLGQWADVSGGGPARSYPVGGLCYYLSPPESMGAI) the chain is on the lumenal side. The helical transmembrane segment at 355–375 (FEDPVHVVVYIIFMLGSCAFF) threads the bilayer. The Cytoplasmic segment spans residues 376-420 (SKTWIEVSGSSAKDVAKQLKEQQMVMRGHRDTSMVHELNRYIPTA). The chain crosses the membrane as a helical span at residues 421 to 441 (AAFGGLCIGALSVLADFLGAI). Over 442-445 (GSGT) the chain is Lumenal. The helical transmembrane segment at 446–462 (GILLAVTIIYQYFEIFV) threads the bilayer. The Cytoplasmic segment spans residues 463–476 (KEQAEVGGMGALFF).

Belongs to the SecY/SEC61-alpha family. The SEC61 channel-forming translocon complex consists of channel-forming core components SEC61A1, SEC61B and SEC61G and different auxiliary components such as SEC62 and SEC63.

The protein resides in the endoplasmic reticulum membrane. Component of SEC61 channel-forming translocon complex that mediates transport of signal peptide-containing precursor polypeptides across the endoplasmic reticulum (ER). Forms a ribosome receptor and a gated pore in the ER membrane, both functions required for cotranslational translocation of nascent polypeptides. The protein is Protein transport protein Sec61 subunit alpha isoform 2 (SEC61A2) of Homo sapiens (Human).